The primary structure comprises 426 residues: Serine hydroxymethyltransferase (426 aa).

(6S)-5,6,7,8-tetrahydrofolate-binding positions include Leu-118 and 122 to 124 (GHL). An N6-(pyridoxal phosphate)lysine modification is found at Lys-227.

It belongs to the SHMT family. As to quaternary structure, homodimer. The cofactor is pyridoxal 5'-phosphate.

The protein resides in the cytoplasm. It carries out the reaction (6R)-5,10-methylene-5,6,7,8-tetrahydrofolate + glycine + H2O = (6S)-5,6,7,8-tetrahydrofolate + L-serine. The protein operates within one-carbon metabolism; tetrahydrofolate interconversion. It functions in the pathway amino-acid biosynthesis; glycine biosynthesis; glycine from L-serine: step 1/1. Its function is as follows. Catalyzes the reversible interconversion of serine and glycine with tetrahydrofolate (THF) serving as the one-carbon carrier. This reaction serves as the major source of one-carbon groups required for the biosynthesis of purines, thymidylate, methionine, and other important biomolecules. Also exhibits THF-independent aldolase activity toward beta-hydroxyamino acids, producing glycine and aldehydes, via a retro-aldol mechanism. This chain is Serine hydroxymethyltransferase, found in Mycolicibacterium paratuberculosis (strain ATCC BAA-968 / K-10) (Mycobacterium paratuberculosis).